The sequence spans 545 residues: CTP synthase (545 aa).

An amidoligase domain region spans residues 1–266 (MTTRYIFVTG…DDLVIKRFNL (266 aa)). Ser14 serves as a coordination point for CTP. A UTP-binding site is contributed by Ser14. ATP is bound by residues 15 to 20 (SLGKGI) and Asp72. Mg(2+) is bound by residues Asp72 and Glu140. Residues 147–149 (DIE), 187–192 (KTKPTQ), and Lys223 contribute to the CTP site. UTP is bound by residues 187 to 192 (KTKPTQ) and Lys223. 239–241 (KDV) contacts ATP. The region spanning 291–542 (TIGMVGKYIE…IAASYAYQKR (252 aa)) is the Glutamine amidotransferase type-1 domain. Gly352 serves as a coordination point for L-glutamine. Residue Cys379 is the Nucleophile; for glutamine hydrolysis of the active site. L-glutamine is bound by residues 380-383 (LGMQ), Glu403, and Arg470. Residues His515 and Glu517 contribute to the active site.

This sequence belongs to the CTP synthase family. As to quaternary structure, homotetramer.

The catalysed reaction is UTP + L-glutamine + ATP + H2O = CTP + L-glutamate + ADP + phosphate + 2 H(+). The enzyme catalyses L-glutamine + H2O = L-glutamate + NH4(+). It carries out the reaction UTP + NH4(+) + ATP = CTP + ADP + phosphate + 2 H(+). It functions in the pathway pyrimidine metabolism; CTP biosynthesis via de novo pathway; CTP from UDP: step 2/2. Its activity is regulated as follows. Allosterically activated by GTP, when glutamine is the substrate; GTP has no effect on the reaction when ammonia is the substrate. The allosteric effector GTP functions by stabilizing the protein conformation that binds the tetrahedral intermediate(s) formed during glutamine hydrolysis. Inhibited by the product CTP, via allosteric rather than competitive inhibition. Its function is as follows. Catalyzes the ATP-dependent amination of UTP to CTP with either L-glutamine or ammonia as the source of nitrogen. Regulates intracellular CTP levels through interactions with the four ribonucleotide triphosphates. In Shewanella frigidimarina (strain NCIMB 400), this protein is CTP synthase.